Reading from the N-terminus, the 201-residue chain is FMN-dependent NADH:quinone oxidoreductase (201 aa).

FMN contacts are provided by residues Ser10, 16-18 (SQS), 95-98 (MYNF), and 139-142 (TTGG).

It belongs to the azoreductase type 1 family. As to quaternary structure, homodimer. The cofactor is FMN.

The catalysed reaction is 2 a quinone + NADH + H(+) = 2 a 1,4-benzosemiquinone + NAD(+). It carries out the reaction N,N-dimethyl-1,4-phenylenediamine + anthranilate + 2 NAD(+) = 2-(4-dimethylaminophenyl)diazenylbenzoate + 2 NADH + 2 H(+). Quinone reductase that provides resistance to thiol-specific stress caused by electrophilic quinones. Its function is as follows. Also exhibits azoreductase activity. Catalyzes the reductive cleavage of the azo bond in aromatic azo compounds to the corresponding amines. The protein is FMN-dependent NADH:quinone oxidoreductase of Tolumonas auensis (strain DSM 9187 / NBRC 110442 / TA 4).